Reading from the N-terminus, the 215-residue chain is Large ribosomal subunit protein bL25 (215 aa).

The tract at residues 190 to 215 is disordered; that stretch reads VLTDAEEETDETPEEPEAIRQKGDEE. Residues 193–205 are compositionally biased toward acidic residues; the sequence is DAEEETDETPEEP. Over residues 206–215 the composition is skewed to basic and acidic residues; the sequence is EAIRQKGDEE.

The protein belongs to the bacterial ribosomal protein bL25 family. CTC subfamily. As to quaternary structure, part of the 50S ribosomal subunit; part of the 5S rRNA/L5/L18/L25 subcomplex. Contacts the 5S rRNA. Binds to the 5S rRNA independently of L5 and L18.

This is one of the proteins that binds to the 5S RNA in the ribosome where it forms part of the central protuberance. The sequence is that of Large ribosomal subunit protein bL25 from Maricaulis maris (strain MCS10) (Caulobacter maris).